A 217-amino-acid chain; its full sequence is Pyrophosphatase PpaX (217 aa).

The Nucleophile role is filled by Asp11.

This sequence belongs to the HAD-like hydrolase superfamily. PpaX family. Mg(2+) is required as a cofactor.

It catalyses the reaction diphosphate + H2O = 2 phosphate + H(+). Hydrolyzes pyrophosphate formed during P-Ser-HPr dephosphorylation by HPrK/P. Might play a role in controlling the intracellular pyrophosphate pool. The sequence is that of Pyrophosphatase PpaX from Listeria innocua serovar 6a (strain ATCC BAA-680 / CLIP 11262).